A 95-amino-acid chain; its full sequence is Aspartyl/glutamyl-tRNA(Asn/Gln) amidotransferase subunit C (95 aa).

It belongs to the GatC family. In terms of assembly, heterotrimer of A, B and C subunits.

The enzyme catalyses L-glutamyl-tRNA(Gln) + L-glutamine + ATP + H2O = L-glutaminyl-tRNA(Gln) + L-glutamate + ADP + phosphate + H(+). The catalysed reaction is L-aspartyl-tRNA(Asn) + L-glutamine + ATP + H2O = L-asparaginyl-tRNA(Asn) + L-glutamate + ADP + phosphate + 2 H(+). Functionally, allows the formation of correctly charged Asn-tRNA(Asn) or Gln-tRNA(Gln) through the transamidation of misacylated Asp-tRNA(Asn) or Glu-tRNA(Gln) in organisms which lack either or both of asparaginyl-tRNA or glutaminyl-tRNA synthetases. The reaction takes place in the presence of glutamine and ATP through an activated phospho-Asp-tRNA(Asn) or phospho-Glu-tRNA(Gln). This Chlorobium phaeobacteroides (strain DSM 266 / SMG 266 / 2430) protein is Aspartyl/glutamyl-tRNA(Asn/Gln) amidotransferase subunit C.